Here is a 432-residue protein sequence, read N- to C-terminus: Glutamate-1-semialdehyde 2,1-aminomutase (432 aa).

The residue at position 271 (lysine 271) is an N6-(pyridoxal phosphate)lysine.

Belongs to the class-III pyridoxal-phosphate-dependent aminotransferase family. HemL subfamily. As to quaternary structure, homodimer. Pyridoxal 5'-phosphate serves as cofactor.

The protein resides in the cytoplasm. It carries out the reaction (S)-4-amino-5-oxopentanoate = 5-aminolevulinate. It participates in porphyrin-containing compound metabolism; protoporphyrin-IX biosynthesis; 5-aminolevulinate from L-glutamyl-tRNA(Glu): step 2/2. Its pathway is porphyrin-containing compound metabolism; chlorophyll biosynthesis. This chain is Glutamate-1-semialdehyde 2,1-aminomutase, found in Prochlorococcus marinus (strain NATL2A).